The primary structure comprises 321 residues: L-Ala-D/L-Glu epimerase (321 aa).

2 residues coordinate substrate: Thr124 and Lys149. Lys151 functions as the Proton acceptor; specific for (R)-substrate epimerization in the catalytic mechanism. Asp176, Glu202, and Asp225 together coordinate Mg(2+). Lys247 functions as the Proton acceptor; specific for (S)-substrate epimerization in the catalytic mechanism. Residues Cys275, Asp297, and Asp299 each contribute to the substrate site.

Belongs to the mandelate racemase/muconate lactonizing enzyme family. Monomer. The cofactor is Mg(2+).

The catalysed reaction is L-alanyl-L-glutamate = L-alanyl-D-glutamate. It functions in the pathway cell wall biogenesis; peptidoglycan recycling. In terms of biological role, catalyzes the epimerization of L-Ala-D-Glu to L-Ala-L-Glu and has a role in the recycling of the murein peptide, of which L-Ala-D-Glu is a component. Is also able to catalyze the reverse reaction and the epimerization of all the L-Ala-X dipeptides, except L-Ala-L-Arg, L-Ala-L-Lys and L-Ala-L-Pro. Is also active with L-Gly-L-Glu, L-Phe-L-Glu, and L-Ser-L-Glu, but not with L-Glu-L-Glu, L-Lys-L-Glu, L-Pro-L-Glu, L-Lys-L-Ala, or D-Ala-D-Ala. The sequence is that of L-Ala-D/L-Glu epimerase (ycjG) from Escherichia coli (strain K12).